The following is a 385-amino-acid chain: Acetate kinase (385 aa).

Asn9 contributes to the Mg(2+) binding site. Residue Lys16 participates in ATP binding. Residue Arg87 participates in substrate binding. Asp144 acts as the Proton donor/acceptor in catalysis. ATP-binding positions include 202–206 (HLGSG) and 277–279 (DMR). Glu373 contributes to the Mg(2+) binding site.

The protein belongs to the acetokinase family. Homodimer. It depends on Mg(2+) as a cofactor. Mn(2+) serves as cofactor.

Its subcellular location is the cytoplasm. The enzyme catalyses acetate + ATP = acetyl phosphate + ADP. It functions in the pathway metabolic intermediate biosynthesis; acetyl-CoA biosynthesis; acetyl-CoA from acetate: step 1/2. Its function is as follows. Catalyzes the formation of acetyl phosphate from acetate and ATP. Can also catalyze the reverse reaction. This chain is Acetate kinase, found in Rickettsia felis (strain ATCC VR-1525 / URRWXCal2) (Rickettsia azadi).